The following is a 140-amino-acid chain: Putative esterase MT1895 (140 aa).

Belongs to the thioesterase PaaI family.

The protein is Putative esterase MT1895 of Mycobacterium tuberculosis (strain CDC 1551 / Oshkosh).